Consider the following 366-residue polypeptide: Chitoporin (366 aa).

The first 23 residues, 1–23 (MDKMFKRTVIGAAVALASTGLMA), serve as a signal peptide directing secretion.

This sequence belongs to the Gram-negative porin family.

Its subcellular location is the cell outer membrane. In terms of biological role, involved in the uptake of chitosugars. This Vibrio furnissii protein is Chitoporin (chiP).